Reading from the N-terminus, the 568-residue chain is MAEPARTLAQDPRLADADQVRWTRCPNCRSLVYLRRLRRNGHVCPDCAHHMRMGVHDRIESLLDAGSFERFGADVAPVDVLGFTDSRPYTERLAQAQRRSGSNEAVLCGTGTIDGAPLVVAALDFGFLGGSVGGVTGELVARAARTALDRRTPLVLVCASGGARMQEGTISLMQMAKTSQEVARLHEAGVLVVSIGTDPTYGGVTASFGMLGDVVVAEPGARIGFAGPQVIRQTIRQELPAGFQTAEYLRDAGMVDLVVPRHELRAHLARLLRVHSGGTAAPAAERGYRTRPRPAADRDASEVLHAARDIGRPSTSDYCARIFEDFVELHGDRVSGDDPAVVAGIGTLGGRPVVVVGHQKGHETAELVQRNFGMPQPAGYHKARRMMDYAERFGFPLVTFVDTPGAHPGVDAEQRGQGTAIAECISRMARLKVPAVSVVTGEGGSGGALALGVGNRVLVLENAYYSVISPEGCSTILWGTAERTSQAAEQLRITAEDLLRLGVVDGVVDEPAGGAQQDHAAMASRLAAALRASIGELSELDGDALLDQRRRRFDRFGDPDHSDSEVQP.

Positions 1 to 253 are acetyl-coenzyme A carboxylase carboxyl transferase subunit beta; that stretch reads MAEPARTLAQ…QTAEYLRDAG (253 aa). Positions 21-290 constitute a CoA carboxyltransferase N-terminal domain; sequence RWTRCPNCRS…APAAERGYRT (270 aa). Residues 21–536 form a carboxyltransferase region; the sequence is RWTRCPNCRS…AAALRASIGE (516 aa). Positions 25, 28, 44, and 47 each coordinate Zn(2+). The segment at 25-47 adopts a C4-type zinc-finger fold; that stretch reads CPNCRSLVYLRRLRRNGHVCPDC. The segment at 254-559 is acetyl-coenzyme A carboxylase carboxyl transferase subunit alpha; sequence MVDLVVPRHE…RRRFDRFGDP (306 aa). In terms of domain architecture, CoA carboxyltransferase C-terminal spans 286–536; it reads RGYRTRPRPA…AAALRASIGE (251 aa).

It in the N-terminal section; belongs to the AccD/PCCB family. The protein in the C-terminal section; belongs to the AccA family. As to quaternary structure, acetyl-CoA carboxylase is a heterotetramer composed of biotin carboxyl carrier protein (AccB), biotin carboxylase (AccC) and two subunits of ACCase subunit beta/alpha. Zn(2+) serves as cofactor.

Its subcellular location is the cytoplasm. The catalysed reaction is N(6)-carboxybiotinyl-L-lysyl-[protein] + acetyl-CoA = N(6)-biotinyl-L-lysyl-[protein] + malonyl-CoA. It participates in lipid metabolism; malonyl-CoA biosynthesis; malonyl-CoA from acetyl-CoA: step 1/1. In terms of biological role, component of the acetyl coenzyme A carboxylase (ACC) complex. Biotin carboxylase (BC) catalyzes the carboxylation of biotin on its carrier protein (BCCP) and then the CO(2) group is transferred by the transcarboxylase to acetyl-CoA to form malonyl-CoA. The sequence is that of Acetyl-coenzyme A carboxylase carboxyl transferase subunits beta/alpha (accD) from Saccharopolyspora erythraea (strain ATCC 11635 / DSM 40517 / JCM 4748 / NBRC 13426 / NCIMB 8594 / NRRL 2338).